A 1433-amino-acid polypeptide reads, in one-letter code: Probable ATP-dependent RNA helicase spindle-E (1433 aa).

A disordered region spans residues 76–98 (NRTLDELDSDDEEENMQEQPSVR). Acidic residues predominate over residues 81–91 (ELDSDDEEENM). Residues 127–294 (MKAIRENPVV…FATSSAFPPV (168 aa)) enclose the Helicase ATP-binding domain. 140–147 (GETGCGKT) contacts ATP. Residues 240–243 (DEVH) carry the DEAH box motif. The Helicase C-terminal domain occupies 354 to 526 (QSLQSYEEAK…NSVLKAKELE (173 aa)). The 64-residue stretch at 937-1000 (ASAVTKGLQL…RLMPHELKRD (64 aa)) folds into the Tudor domain.

The protein belongs to the DEAD box helicase family. DEAH subfamily.

The protein localises to the cytoplasm. The enzyme catalyses ATP + H2O = ADP + phosphate + H(+). Its function is as follows. Probable ATP-binding RNA helicase which plays a central role during spermatogenesis and oogenesis by repressing transposable elements and preventing their mobilization, which is essential for the germline integrity. Acts via the piRNA metabolic process, which mediates the repression of transposable elements during meiosis by forming complexes composed of piRNAs and Piwi and govern the methylation and subsequent repression of transposons. Involved in the repression of LTR retrotransposon copia. Also involved in telomere regulation by repressing specialized telomeric retroelements HeT-A, TAHRE, and TART; Drosophila telomeres being maintained by transposition of specialized telomeric retroelements. Involved in telomeric trans-silencing, a repression mechanism by which a transposon or a transgene inserted in subtelomeric heterochromatin has the capacity to repress in trans in the female germline, a homologous transposon, or transgene located in euchromatin. Involved in the repression of testis-expressed Stellate genes by the homologous Su(Ste) repeats. Required for anteroposterior and dorsoventral axis formation during oogenesis. This Drosophila virilis (Fruit fly) protein is Probable ATP-dependent RNA helicase spindle-E (spn-E).